The following is a 318-amino-acid chain: tRNA-cytidine(32) 2-sulfurtransferase (318 aa).

Residues 52–57 (SGGKDS) carry the PP-loop motif motif. [4Fe-4S] cluster-binding residues include Cys-127, Cys-130, and Cys-218.

This sequence belongs to the TtcA family. In terms of assembly, homodimer. Mg(2+) is required as a cofactor. The cofactor is [4Fe-4S] cluster.

The protein resides in the cytoplasm. It carries out the reaction cytidine(32) in tRNA + S-sulfanyl-L-cysteinyl-[cysteine desulfurase] + AH2 + ATP = 2-thiocytidine(32) in tRNA + L-cysteinyl-[cysteine desulfurase] + A + AMP + diphosphate + H(+). It participates in tRNA modification. Its function is as follows. Catalyzes the ATP-dependent 2-thiolation of cytidine in position 32 of tRNA, to form 2-thiocytidine (s(2)C32). The sulfur atoms are provided by the cysteine/cysteine desulfurase (IscS) system. This Actinobacillus pleuropneumoniae serotype 3 (strain JL03) protein is tRNA-cytidine(32) 2-sulfurtransferase.